A 51-amino-acid chain; its full sequence is Small polypeptide DEVIL 1 (51 aa).

The disordered stretch occupies residues Met-1–Leu-25. Residues Glu-16 to Leu-25 are compositionally biased toward basic residues. The required for DVL/RTFL small polypeptide activity stretch occupies residues Ser-20–Asp-51. The chain crosses the membrane as a helical span at residues Tyr-28 to Val-44.

Belongs to the DVL/RTFL small polypeptides family. In terms of tissue distribution, mostly expressed in leaves and, to a lower extent, in roots and stems.

It localises to the cell membrane. Functionally, small polypeptide acting as a regulatory molecule which coordinates cellular responses required for differentiation, growth and development, including leaves shape, pedicule elongation, inflorescence organization and fruit maturation, probably by restricting polar cell proliferation in lateral organs and coordinating socket cell recruitment and differentiation at trichome sites. This chain is Small polypeptide DEVIL 1, found in Arabidopsis thaliana (Mouse-ear cress).